The primary structure comprises 369 residues: Putative 2-aminoethylphosphonate import ATP-binding protein PhnT (369 aa).

Residues isoleucine 19 to leucine 250 form the ABC transporter domain. Glycine 51–threonine 58 contributes to the ATP binding site.

Belongs to the ABC transporter superfamily. 2-aminoethylphosphonate importer (TC 3.A.1.11.5) family.

It is found in the cell inner membrane. In terms of biological role, probably part of the PhnSTUV complex (TC 3.A.1.11.5) involved in 2-aminoethylphosphonate import. Probably responsible for energy coupling to the transport system. The protein is Putative 2-aminoethylphosphonate import ATP-binding protein PhnT (phnT) of Salmonella typhi.